The chain runs to 1175 residues: 1-phosphatidylinositol 4,5-bisphosphate phosphodiesterase beta-4 (1175 aa).

N-acetylalanine is present on Ala2. Residues Gln313–Lys463 form the PI-PLC X-box domain. Catalysis depends on residues His328 and His375. Residues Ala487–Pro512 form a disordered region. Positions Leu493–Glu508 are enriched in acidic residues. One can recognise a PI-PLC Y-box domain in the interval Leu565 to Arg681. Residues Asp684–Leu809 enclose the C2 domain. 2 disordered regions span residues Ser860–Gly904 and Lys1082–Leu1110. Polar residues-rich tracts occupy residues Val885–Ala900 and Met1085–Asp1094. Thr886 carries the phosphothreonine modification. A compositionally biased stretch (basic and acidic residues) spans Lys1095 to Glu1109.

The cofactor is Ca(2+). Preferentially expressed in the retina.

It localises to the cell membrane. The enzyme catalyses a 1,2-diacyl-sn-glycero-3-phospho-(1D-myo-inositol-4,5-bisphosphate) + H2O = 1D-myo-inositol 1,4,5-trisphosphate + a 1,2-diacyl-sn-glycerol + H(+). It catalyses the reaction a 1,2-diacyl-sn-glycero-3-phospho-(1D-myo-inositol) + H2O = 1D-myo-inositol 1-phosphate + a 1,2-diacyl-sn-glycerol + H(+). In terms of biological role, activated phosphatidylinositol-specific phospholipase C enzymes catalyze the production of the second messenger molecules diacylglycerol (DAG) and inositol 1,4,5-trisphosphate (IP3) involved in G-protein coupled receptor signaling pathways. PLCB4 is a direct effector of the endothelin receptor signaling pathway that plays an essential role in lower jaw and middle ear structures development. The sequence is that of 1-phosphatidylinositol 4,5-bisphosphate phosphodiesterase beta-4 from Rattus norvegicus (Rat).